The primary structure comprises 212 residues: Probable chemoreceptor glutamine deamidase CheD (212 aa).

Belongs to the CheD family.

It carries out the reaction L-glutaminyl-[protein] + H2O = L-glutamyl-[protein] + NH4(+). In terms of biological role, probably deamidates glutamine residues to glutamate on methyl-accepting chemotaxis receptors (MCPs), playing an important role in chemotaxis. The sequence is that of Probable chemoreceptor glutamine deamidase CheD from Bordetella parapertussis (strain 12822 / ATCC BAA-587 / NCTC 13253).